Reading from the N-terminus, the 100-residue chain is Coiled-coil domain-containing protein 167 (100 aa).

Positions 14–81 (VASEIDRVEE…VLRGENRRNM (68 aa)) form a coiled coil. The chain crosses the membrane as a helical span at residues 82–99 (MLSVALLAISALFYYTFI).

Its subcellular location is the membrane. The sequence is that of Coiled-coil domain-containing protein 167 (ccdc167) from Danio rerio (Zebrafish).